The primary structure comprises 37 residues: Large ribosomal subunit protein bL36c (37 aa).

It belongs to the bacterial ribosomal protein bL36 family.

The protein localises to the plastid. It localises to the chloroplast. In Lolium perenne (Perennial ryegrass), this protein is Large ribosomal subunit protein bL36c.